A 313-amino-acid chain; its full sequence is D-alanine--D-alanine ligase (313 aa).

In terms of domain architecture, ATP-grasp spans 111-306; it reads KQVWHSLGLP…FQQLVLAILA (196 aa). ATP is bound at residue 137 to 192; it reads AAELGFPLIVKPAHEGSSIGMAKVESVEALIAAWQDAARYDSQVLVEQWIAGPEYT. Residues aspartate 260, glutamate 273, and asparagine 275 each coordinate Mg(2+).

Belongs to the D-alanine--D-alanine ligase family. It depends on Mg(2+) as a cofactor. Mn(2+) serves as cofactor.

The protein resides in the cytoplasm. It catalyses the reaction 2 D-alanine + ATP = D-alanyl-D-alanine + ADP + phosphate + H(+). The protein operates within cell wall biogenesis; peptidoglycan biosynthesis. Functionally, cell wall formation. The sequence is that of D-alanine--D-alanine ligase from Ectopseudomonas mendocina (strain ymp) (Pseudomonas mendocina).